A 354-amino-acid polypeptide reads, in one-letter code: Probable mannitol dehydrogenase 1 (354 aa).

Zn(2+) is bound by residues Cys-43, His-65, Cys-96, Cys-99, Cys-102, Cys-110, and Cys-158.

The protein belongs to the zinc-containing alcohol dehydrogenase family. Zn(2+) serves as cofactor.

The catalysed reaction is D-mannitol + NAD(+) = D-mannose + NADH + H(+). Its function is as follows. Oxidizes mannitol to mannose. Provides the initial step by which translocated mannitol is committed to central metabolism and, by regulating mannitol pool size, is important in regulating salt tolerance at the cellular level. The sequence is that of Probable mannitol dehydrogenase 1 (CAD1) from Stylosanthes humilis (Townsville stylo).